Consider the following 240-residue polypeptide: Phosducin-like protein 2 (240 aa).

A Phosducin domain is found at 38 to 201 (QQEAMVKPYE…LEWKLSEVGA (164 aa)). The segment at 89-240 (FGELREISGN…DSSGSDTEAK (152 aa)) is thioredoxin fold.

This sequence belongs to the phosducin family. As to quaternary structure, interacts with the CCT chaperonin complex and actin. Testis-specific (at protein level).

It is found in the endoplasmic reticulum. Essential for male fertility, spermiogenesis and acrosome formation. This Mus musculus (Mouse) protein is Phosducin-like protein 2 (Pdcl2).